The chain runs to 178 residues: Gluconokinase (178 aa).

Residue 19–26 coordinates ATP; it reads GVSGTGKT.

The protein belongs to the gluconokinase GntK/GntV family. As to quaternary structure, monomer.

The enzyme catalyses D-gluconate + ATP = 6-phospho-D-gluconate + ADP + H(+). The protein operates within carbohydrate acid metabolism; D-gluconate degradation. Activated by magnesium. In terms of biological role, phosphorylates gluconate to 6-phosphogluconate. This Gluconobacter oxydans (strain 621H) (Gluconobacter suboxydans) protein is Gluconokinase.